A 197-amino-acid polypeptide reads, in one-letter code: Holliday junction branch migration complex subunit RuvA (197 aa).

Residues 1–64 form a domain I region; sequence MYEYIKGKYI…EDFIGVYGFL (64 aa). Residues 65–144 form a domain II region; it reads TKDELSMFKL…DILEEDDEQI (80 aa). Residues 145–149 are flexible linker; it reads INKVT. Residues 149-197 are domain III; it reads TDDKKVLEAVAALVTLGYSEKEANKVINSCDKNNSLEQIIKEALKYLMK.

This sequence belongs to the RuvA family. Homotetramer. Forms an RuvA(8)-RuvB(12)-Holliday junction (HJ) complex. HJ DNA is sandwiched between 2 RuvA tetramers; dsDNA enters through RuvA and exits via RuvB. An RuvB hexamer assembles on each DNA strand where it exits the tetramer. Each RuvB hexamer is contacted by two RuvA subunits (via domain III) on 2 adjacent RuvB subunits; this complex drives branch migration. In the full resolvosome a probable DNA-RuvA(4)-RuvB(12)-RuvC(2) complex forms which resolves the HJ.

The protein localises to the cytoplasm. The RuvA-RuvB-RuvC complex processes Holliday junction (HJ) DNA during genetic recombination and DNA repair, while the RuvA-RuvB complex plays an important role in the rescue of blocked DNA replication forks via replication fork reversal (RFR). RuvA specifically binds to HJ cruciform DNA, conferring on it an open structure. The RuvB hexamer acts as an ATP-dependent pump, pulling dsDNA into and through the RuvAB complex. HJ branch migration allows RuvC to scan DNA until it finds its consensus sequence, where it cleaves and resolves the cruciform DNA. The sequence is that of Holliday junction branch migration complex subunit RuvA from Clostridium botulinum (strain Kyoto / Type A2).